We begin with the raw amino-acid sequence, 126 residues long: Fluoride-specific ion channel FluC (126 aa).

4 helical membrane passes run 7–24, 35–55, 69–89, and 98–118; these read LWVS…YFLS, FPWG…LFLV, LLIA…AYES, and WGLF…AVLG. Glycine 77 and threonine 80 together coordinate Na(+).

It belongs to the fluoride channel Fluc/FEX (TC 1.A.43) family.

The protein resides in the cell inner membrane. It carries out the reaction fluoride(in) = fluoride(out). Its activity is regulated as follows. Na(+) is not transported, but it plays an essential structural role and its presence is essential for fluoride channel function. Functionally, fluoride-specific ion channel. Important for reducing fluoride concentration in the cell, thus reducing its toxicity. The chain is Fluoride-specific ion channel FluC from Koribacter versatilis (strain Ellin345).